Here is a 514-residue protein sequence, read N- to C-terminus: 3-octaprenyl-4-hydroxybenzoate carboxy-lyase (514 aa).

N177 lines the Mn(2+) pocket. Residues I180–R182, R194–L196, and R199–G200 contribute to the prenylated FMN site. E243 lines the Mn(2+) pocket. The active-site Proton donor is D314.

It belongs to the UbiD family. As to quaternary structure, homohexamer. Prenylated FMN serves as cofactor. It depends on Mn(2+) as a cofactor.

The protein localises to the cell membrane. The enzyme catalyses a 4-hydroxy-3-(all-trans-polyprenyl)benzoate + H(+) = a 2-(all-trans-polyprenyl)phenol + CO2. It functions in the pathway cofactor biosynthesis; ubiquinone biosynthesis. Functionally, catalyzes the decarboxylation of 3-octaprenyl-4-hydroxy benzoate to 2-octaprenylphenol, an intermediate step in ubiquinone biosynthesis. The protein is 3-octaprenyl-4-hydroxybenzoate carboxy-lyase of Bordetella parapertussis (strain 12822 / ATCC BAA-587 / NCTC 13253).